A 417-amino-acid polypeptide reads, in one-letter code: GTP-binding protein YPT11 (417 aa).

Residues 1-34 are disordered; sequence MSQRKRYSLNVVTSPSIPSPTPSAPIRTNESNWE. GTP contacts are provided by residues 97–104, 228–232, and 292–295; these read GDANVGKT, DTAGQ, and NKID. 2 S-geranylgeranyl cysteine lipidation sites follow: Cys-415 and Cys-416.

Belongs to the small GTPase superfamily. Rab family. Interacts with MYO2 (via C-terminal tail domain). Interacts with YIF1, YIP3, YIP4 and YIP5.

Its subcellular location is the endoplasmic reticulum membrane. It localises to the bud tip. It is found in the bud neck. Functionally, involved in the positive control of both endoplasmic reticulum (ER) and mitochondrion inheritance during cell divison. Required for the MYO2-dependent retention of newly inherited mitochondria at the bud tip in developing daughter cells. This chain is GTP-binding protein YPT11 (YPT11), found in Saccharomyces cerevisiae (strain AWRI1631) (Baker's yeast).